Reading from the N-terminus, the 131-residue chain is Peptide methionine sulfoxide reductase MsrB (131 aa).

In terms of domain architecture, MsrB spans Leu8–Arg130. Zn(2+) contacts are provided by Cys47, Cys50, Cys96, and Cys99. Residue Cys119 is the Nucleophile of the active site.

It belongs to the MsrB Met sulfoxide reductase family. It depends on Zn(2+) as a cofactor.

The catalysed reaction is L-methionyl-[protein] + [thioredoxin]-disulfide + H2O = L-methionyl-(R)-S-oxide-[protein] + [thioredoxin]-dithiol. This chain is Peptide methionine sulfoxide reductase MsrB, found in Pseudomonas entomophila (strain L48).